The following is a 116-amino-acid chain: uncharacterized protein (116 aa).

Disordered regions lie at residues 1 to 26 (MLLT…KSSN) and 74 to 116 (ENDL…KSSI). A compositionally biased stretch (low complexity) spans 14–26 (SANSTDDSSKSSN). Positions 74–86 (ENDLKRSKSQGRE) are enriched in basic and acidic residues. Polar residues predominate over residues 104–116 (NTASEIQRTKSSI).

This is an uncharacterized protein from Saccharomyces cerevisiae (strain ATCC 204508 / S288c) (Baker's yeast).